We begin with the raw amino-acid sequence, 87 residues long: Toxin CsEv3 (87 aa).

The signal sequence occupies residues 1-19 (MNSLLMITACLFLIGTVWA). The 66-residue stretch at 20 to 85 (KEGYLVNKST…TYPLPNKSCG (66 aa)) folds into the LCN-type CS-alpha/beta domain. Disulfide bonds link Cys31–Cys84, Cys35–Cys60, Cys44–Cys65, and Cys48–Cys67. Cys84 is modified (cysteine amide).

The protein belongs to the long (4 C-C) scorpion toxin superfamily. Sodium channel inhibitor family. Beta subfamily. As to expression, expressed by the venom gland.

It localises to the secreted. In terms of biological role, beta toxins bind voltage-independently at site-4 of sodium channels (Nav) and shift the voltage of activation toward more negative potentials thereby affecting sodium channel activation and promoting spontaneous and repetitive firing. Induces immediate paralysis in crickets after injection, with a total paralysis occurring within 15-30 minutes and lasting for 1-2 hours. Is also lethal to vertebrate (chicks) when injected in very high dosages (more that 100 mg/kg). This chain is Toxin CsEv3, found in Centruroides sculpturatus (Arizona bark scorpion).